A 444-amino-acid chain; its full sequence is Phosphoribosylamine--glycine ligase (444 aa).

In terms of domain architecture, ATP-grasp spans 109-324 (RNLFKKYNIK…FLEVCEAIVN (216 aa)). 140-202 (LTEKGIKAVV…EEKLEGVEFT (63 aa)) is a binding site for ATP. Mg(2+) contacts are provided by Q282, E294, and N296. Residues Q282, E294, and N296 each contribute to the Mn(2+) site.

It belongs to the GARS family. The cofactor is Mg(2+). Requires Mn(2+) as cofactor.

The enzyme catalyses 5-phospho-beta-D-ribosylamine + glycine + ATP = N(1)-(5-phospho-beta-D-ribosyl)glycinamide + ADP + phosphate + H(+). Its pathway is purine metabolism; IMP biosynthesis via de novo pathway; N(1)-(5-phospho-D-ribosyl)glycinamide from 5-phospho-alpha-D-ribose 1-diphosphate: step 2/2. In Methanocaldococcus jannaschii (strain ATCC 43067 / DSM 2661 / JAL-1 / JCM 10045 / NBRC 100440) (Methanococcus jannaschii), this protein is Phosphoribosylamine--glycine ligase.